Consider the following 901-residue polypeptide: Protein translocase subunit SecA (901 aa).

ATP contacts are provided by residues Gln-87, 105–109, and Asp-512; that span reads GEGKT. Residues 852–901 form a disordered region; sequence AQMQQLSHQSDDEAAAEDLAAQTGERKVGRNDPCPCGSGKKYKQCHGRLS. Zn(2+)-binding residues include Cys-885, Cys-887, Cys-896, and His-897. Residues 891–901 are compositionally biased toward basic residues; the sequence is KKYKQCHGRLS.

It belongs to the SecA family. As to quaternary structure, monomer and homodimer. Part of the essential Sec protein translocation apparatus which comprises SecA, SecYEG and auxiliary proteins SecDF-YajC and YidC. Requires Zn(2+) as cofactor.

Its subcellular location is the cell inner membrane. The protein localises to the cytoplasm. The enzyme catalyses ATP + H2O + cellular proteinSide 1 = ADP + phosphate + cellular proteinSide 2.. Its function is as follows. Part of the Sec protein translocase complex. Interacts with the SecYEG preprotein conducting channel. Has a central role in coupling the hydrolysis of ATP to the transfer of proteins into and across the cell membrane, serving both as a receptor for the preprotein-SecB complex and as an ATP-driven molecular motor driving the stepwise translocation of polypeptide chains across the membrane. This is Protein translocase subunit SecA from Klebsiella pneumoniae (strain 342).